The following is a 95-amino-acid chain: Small ribosomal subunit protein bS21 (95 aa).

A disordered region spans residues 55 to 95 (RKLARKKMQREGLLPMKPKPVFGAGPGAGRGGPGAGARPPR). Residues 78–89 (AGPGAGRGGPGA) are compositionally biased toward gly residues.

Belongs to the bacterial ribosomal protein bS21 family.

The sequence is that of Small ribosomal subunit protein bS21 from Nitrobacter hamburgensis (strain DSM 10229 / NCIMB 13809 / X14).